A 141-amino-acid polypeptide reads, in one-letter code: Large ribosomal subunit protein uL11 (141 aa).

It belongs to the universal ribosomal protein uL11 family. As to quaternary structure, part of the ribosomal stalk of the 50S ribosomal subunit. Interacts with L10 and the large rRNA to form the base of the stalk. L10 forms an elongated spine to which L12 dimers bind in a sequential fashion forming a multimeric L10(L12)X complex. Post-translationally, one or more lysine residues are methylated.

Its function is as follows. Forms part of the ribosomal stalk which helps the ribosome interact with GTP-bound translation factors. This Shouchella clausii (strain KSM-K16) (Alkalihalobacillus clausii) protein is Large ribosomal subunit protein uL11.